The chain runs to 77 residues: Translation initiation factor IF-1, chloroplastic (77 aa).

The S1-like domain occupies 1–71; the sequence is MKEQKWIHEG…TKGRIIYRIR (71 aa).

Belongs to the IF-1 family. Component of the 30S ribosomal translation pre-initiation complex which assembles on the 30S ribosome in the order IF-2 and IF-3, IF-1 and N-formylmethionyl-tRNA(fMet); mRNA recruitment can occur at any time during PIC assembly.

It is found in the plastid. It localises to the chloroplast. Its function is as follows. One of the essential components for the initiation of protein synthesis. Stabilizes the binding of IF-2 and IF-3 on the 30S subunit to which N-formylmethionyl-tRNA(fMet) subsequently binds. Helps modulate mRNA selection, yielding the 30S pre-initiation complex (PIC). Upon addition of the 50S ribosomal subunit IF-1, IF-2 and IF-3 are released leaving the mature 70S translation initiation complex. This Vitis vinifera (Grape) protein is Translation initiation factor IF-1, chloroplastic.